A 260-amino-acid chain; its full sequence is Ribosomal RNA small subunit methyltransferase G (260 aa).

The tract at residues 1–45 (MKQRGPAGGRSSSPKPSAPGSGAGEGPDGRSAPASQKINKASAND) is disordered. Residues 9–20 (GRSSSPKPSAPG) are compositionally biased toward low complexity. The span at 33–45 (PASQKINKASAND) shows a compositional bias: polar residues. S-adenosyl-L-methionine is bound by residues glycine 123, phenylalanine 128, and arginine 193.

Belongs to the methyltransferase superfamily. RNA methyltransferase RsmG family.

The protein localises to the cytoplasm. It carries out the reaction guanosine(527) in 16S rRNA + S-adenosyl-L-methionine = N(7)-methylguanosine(527) in 16S rRNA + S-adenosyl-L-homocysteine. Functionally, specifically methylates the N7 position of guanine in position 527 of 16S rRNA. The protein is Ribosomal RNA small subunit methyltransferase G of Bradyrhizobium diazoefficiens (strain JCM 10833 / BCRC 13528 / IAM 13628 / NBRC 14792 / USDA 110).